A 353-amino-acid polypeptide reads, in one-letter code: DNA polymerase IV (353 aa).

Positions 14–198 (IIHIDMDAFF…MDISKFHGVG (185 aa)) constitute a UmuC domain. Positions 18 and 116 each coordinate Mg(2+). Residue Glu-117 is part of the active site.

This sequence belongs to the DNA polymerase type-Y family. As to quaternary structure, monomer. Mg(2+) serves as cofactor.

It localises to the cytoplasm. The enzyme catalyses DNA(n) + a 2'-deoxyribonucleoside 5'-triphosphate = DNA(n+1) + diphosphate. Functionally, poorly processive, error-prone DNA polymerase involved in untargeted mutagenesis. Copies undamaged DNA at stalled replication forks, which arise in vivo from mismatched or misaligned primer ends. These misaligned primers can be extended by PolIV. Exhibits no 3'-5' exonuclease (proofreading) activity. May be involved in translesional synthesis, in conjunction with the beta clamp from PolIII. This chain is DNA polymerase IV, found in Streptococcus pneumoniae serotype 2 (strain D39 / NCTC 7466).